The sequence spans 206 residues: Imidazoleglycerol-phosphate dehydratase (206 aa).

The protein belongs to the imidazoleglycerol-phosphate dehydratase family.

The protein localises to the cytoplasm. It catalyses the reaction D-erythro-1-(imidazol-4-yl)glycerol 3-phosphate = 3-(imidazol-4-yl)-2-oxopropyl phosphate + H2O. The protein operates within amino-acid biosynthesis; L-histidine biosynthesis; L-histidine from 5-phospho-alpha-D-ribose 1-diphosphate: step 6/9. The sequence is that of Imidazoleglycerol-phosphate dehydratase from Leptospira borgpetersenii serovar Hardjo-bovis (strain JB197).